Here is a 58-residue protein sequence, read N- to C-terminus: Small ribosomal subunit protein bS21 (58 aa).

The interval 31–58 (DLKRIRHHETPVEKYKRKAQQRRRSRRR) is disordered. The span at 45–58 (YKRKAQQRRRSRRR) shows a compositional bias: basic residues.

This sequence belongs to the bacterial ribosomal protein bS21 family.

The sequence is that of Small ribosomal subunit protein bS21 from Prochlorococcus marinus (strain MIT 9303).